The following is a 915-amino-acid chain: Nitrate reductase [NADH] (915 aa).

The interval 1–102 is disordered; that stretch reads MAASVEPRQP…PRDEGTADAW (102 aa). The span at 16-26 shows a compositional bias: low complexity; sequence APATAPTARAP. Positions 57 to 71 are enriched in acidic residues; that stretch reads AEEEEDDDDEDDEGH. Positions 88–97 are enriched in basic and acidic residues; that stretch reads PSTRDPRDEG. Cys-189 contributes to the Mo-molybdopterin binding site. The Cytochrome b5 heme-binding domain maps to 538 to 613; the sequence is DKQFTMSEVR…LDTYRIGELI (76 aa). Heme is bound by residues His-573 and His-596. The region spanning 654–767 is the FAD-binding FR-type domain; that stretch reads REKVPCRLVD…KGPLGHVEYT (114 aa). FAD is bound by residues 706-709, 723-727, Phe-728, Phe-735, 740-742, Ser-791, and Thr-794; these read RAYT, LVKVY, and LMT.

Belongs to the nitrate reductase family. In terms of assembly, homodimer. It depends on FAD as a cofactor. Heme serves as cofactor. Requires Mo-molybdopterin as cofactor.

It carries out the reaction nitrite + NAD(+) + H2O = nitrate + NADH + H(+). In terms of biological role, nitrate reductase is a key enzyme involved in the first step of nitrate assimilation in plants, fungi and bacteria. This chain is Nitrate reductase [NADH], found in Hordeum vulgare (Barley).